The sequence spans 85 residues: UPF0297 protein LGAS_0422 (85 aa).

Belongs to the UPF0297 family.

The sequence is that of UPF0297 protein LGAS_0422 from Lactobacillus gasseri (strain ATCC 33323 / DSM 20243 / BCRC 14619 / CIP 102991 / JCM 1131 / KCTC 3163 / NCIMB 11718 / NCTC 13722 / AM63).